The chain runs to 510 residues: NAD(P)H-quinone oxidoreductase subunit 2 B, chloroplastic (510 aa).

13 helical membrane-spanning segments follow: residues 24 to 44 (LLLFDGSLIVPECILIFGLIL), 57 to 77 (IPWLYFISSTSLVMSITALLF), 99 to 119 (IFQFLILLCSTLCIPLSVEYI), 124 to 144 (MAITEFLLFVLTATLGGMFLC), 149 to 169 (LITIFVAPECFSLCSYLLSGY), 183 to 203 (YLLMGGASSSILVHGFSWLYG), 227 to 247 (PGISIALIFITVGIGFKLSPA), 295 to 315 (WHLLLETLAILSMILGNLIAI), 323 to 343 (MLAYSSIGQIGYVIIGIIVGD), 354 to 374 (YMLFYISMNLGTFACIVLFGL), 395 to 415 (ALSLALCLLSLGGLPPLAGFF), 418 to 438 (LYLFWCGWQAGLYFLVLIGLL), and 484 to 504 (MIVCVIASTIPGISMNPIIAI).

The protein belongs to the complex I subunit 2 family. In terms of assembly, NDH is composed of at least 16 different subunits, 5 of which are encoded in the nucleus.

The protein resides in the plastid. Its subcellular location is the chloroplast thylakoid membrane. It carries out the reaction a plastoquinone + NADH + (n+1) H(+)(in) = a plastoquinol + NAD(+) + n H(+)(out). The enzyme catalyses a plastoquinone + NADPH + (n+1) H(+)(in) = a plastoquinol + NADP(+) + n H(+)(out). Functionally, NDH shuttles electrons from NAD(P)H:plastoquinone, via FMN and iron-sulfur (Fe-S) centers, to quinones in the photosynthetic chain and possibly in a chloroplast respiratory chain. The immediate electron acceptor for the enzyme in this species is believed to be plastoquinone. Couples the redox reaction to proton translocation, and thus conserves the redox energy in a proton gradient. The sequence is that of NAD(P)H-quinone oxidoreductase subunit 2 B, chloroplastic from Daucus carota (Wild carrot).